The primary structure comprises 315 residues: Ribosomal protein L11 methyltransferase (315 aa).

Positions 162, 183, 205, and 248 each coordinate S-adenosyl-L-methionine.

It belongs to the methyltransferase superfamily. PrmA family.

The protein localises to the cytoplasm. It carries out the reaction L-lysyl-[protein] + 3 S-adenosyl-L-methionine = N(6),N(6),N(6)-trimethyl-L-lysyl-[protein] + 3 S-adenosyl-L-homocysteine + 3 H(+). Functionally, methylates ribosomal protein L11. The polypeptide is Ribosomal protein L11 methyltransferase (Oceanobacillus iheyensis (strain DSM 14371 / CIP 107618 / JCM 11309 / KCTC 3954 / HTE831)).